We begin with the raw amino-acid sequence, 196 residues long: Molybdenum cofactor guanylyltransferase (196 aa).

GTP-binding positions include 10–12 (LAG), Lys23, Asn51, Asp69, and Asp99. Asp99 contributes to the Mg(2+) binding site.

Belongs to the MobA family. In terms of assembly, monomer. Mg(2+) serves as cofactor.

It localises to the cytoplasm. The enzyme catalyses Mo-molybdopterin + GTP + H(+) = Mo-molybdopterin guanine dinucleotide + diphosphate. Its function is as follows. Transfers a GMP moiety from GTP to Mo-molybdopterin (Mo-MPT) cofactor (Moco or molybdenum cofactor) to form Mo-molybdopterin guanine dinucleotide (Mo-MGD) cofactor. The chain is Molybdenum cofactor guanylyltransferase from Shewanella sp. (strain W3-18-1).